The following is a 125-amino-acid chain: Large-conductance mechanosensitive channel (125 aa).

Helical transmembrane passes span 14-34 (VIDLAVGVIIGAAFTAIVQSL) and 67-87 (GSFLNSIINFLIISFIVFLIV).

Belongs to the MscL family. Homopentamer.

It localises to the cell membrane. Its function is as follows. Channel that opens in response to stretch forces in the membrane lipid bilayer. May participate in the regulation of osmotic pressure changes within the cell. The chain is Large-conductance mechanosensitive channel from Lactobacillus helveticus (strain DPC 4571).